A 69-amino-acid chain; its full sequence is Conotoxin Eb6.1 (69 aa).

An N-terminal signal peptide occupies residues 1–17 (VLIIAVLFLTACQLTTA). Residues 18-41 (ETYSRGRQKHRARRSTDKNSKWTR) constitute a propeptide that is removed on maturation. 3 disulfides stabilise this stretch: Cys43/Cys57, Cys50/Cys61, and Cys56/Cys68.

The protein belongs to the conotoxin O1 superfamily. In terms of tissue distribution, expressed by the venom duct.

The protein resides in the secreted. The chain is Conotoxin Eb6.1 (E1) from Conus ebraeus (Hebrew cone).